A 229-amino-acid chain; its full sequence is Ribonuclease 3 (229 aa).

An RNase III domain is found at 7–132 (LKAFEGRIGH…VIAAVYLDAG (126 aa)). Mg(2+) is bound at residue Glu-45. Residue Asp-49 is part of the active site. Mg(2+) contacts are provided by Asp-118 and Glu-121. Glu-121 is an active-site residue. One can recognise a DRBM domain in the interval 157–226 (DAKTALQEWA…ARALLARMEA (70 aa)).

Belongs to the ribonuclease III family. Homodimer. Requires Mg(2+) as cofactor.

The protein localises to the cytoplasm. The catalysed reaction is Endonucleolytic cleavage to 5'-phosphomonoester.. In terms of biological role, digests double-stranded RNA. Involved in the processing of primary rRNA transcript to yield the immediate precursors to the large and small rRNAs (23S and 16S). Processes some mRNAs, and tRNAs when they are encoded in the rRNA operon. Processes pre-crRNA and tracrRNA of type II CRISPR loci if present in the organism. The protein is Ribonuclease 3 of Cereibacter sphaeroides (strain ATCC 17029 / ATH 2.4.9) (Rhodobacter sphaeroides).